The chain runs to 1487 residues: Chromosome partition protein MukB (1487 aa).

34-41 (GGNGAGKS) contacts ATP. Coiled-coil stretches lie at residues 297–458 (GSRE…TNAL), 506–601 (RESQ…LEAI), 637–666 (LEQE…RLAS), 781–806 (RAAR…AKAA), 836–1109 (EQAL…ELRT), and 1210–1266 (VEAI…LSNI). The segment at 667-784 (PGGSNDPRLK…EIPLFGRAAR (118 aa)) is flexible hinge.

It belongs to the SMC family. MukB subfamily. In terms of assembly, homodimerization via its hinge domain. Binds to DNA via its C-terminal region. Interacts, and probably forms a ternary complex, with MukE and MukF via its C-terminal region. The complex formation is stimulated by calcium or magnesium. Interacts with tubulin-related protein FtsZ.

The protein resides in the cytoplasm. The protein localises to the nucleoid. In terms of biological role, plays a central role in chromosome condensation, segregation and cell cycle progression. Functions as a homodimer, which is essential for chromosome partition. Involved in negative DNA supercoiling in vivo, and by this means organize and compact chromosomes. May achieve or facilitate chromosome segregation by condensation DNA from both sides of a centrally located replisome during cell division. This Vibrio parahaemolyticus serotype O3:K6 (strain RIMD 2210633) protein is Chromosome partition protein MukB.